Reading from the N-terminus, the 151-residue chain is Large ribosomal subunit protein bL9 (151 aa).

This sequence belongs to the bacterial ribosomal protein bL9 family.

In terms of biological role, binds to the 23S rRNA. In Dehalococcoides mccartyi (strain ATCC BAA-2266 / KCTC 15142 / 195) (Dehalococcoides ethenogenes (strain 195)), this protein is Large ribosomal subunit protein bL9.